Reading from the N-terminus, the 389-residue chain is Krueppel-like factor 17 (389 aa).

2 disordered regions span residues 1 to 48 and 239 to 279; these read MYGR…SGVH and LVSQ…GSSE. Residues 26–38 are compositionally biased toward polar residues; sequence AQDNENSAPILNM. A compositionally biased stretch (basic and acidic residues) spans 264–278; it reads KNSRPQEGTGRRGSS. 3 C2H2-type zinc fingers span residues 283-307, 313-337, and 343-365; these read YCCN…QRKH, YSCN…MRVH, and YKCD…QKTH. The segment at 356–389 is disordered; it reads DHLKQHQKTHRPGPSDPQANNNNGEQDSPPAAGP. The segment covering 372–381 has biased composition (polar residues); the sequence is PQANNNNGEQ.

It belongs to the Sp1 C2H2-type zinc-finger protein family.

It is found in the nucleus. Transcription repressor that binds to the promoter of target genes and prevents their expression. Acts as a negative regulator of epithelial-mesenchymal transition and metastasis in breast cancer. Specifically binds the 5'-CACCC-3' sequence in the promoter of ID1, a key metastasis regulator in breast cancer, and repress its expression. May be a germ cell-specific transcription factor that plays important roles in spermatid differentiation and oocyte development. This chain is Krueppel-like factor 17 (KLF17), found in Homo sapiens (Human).